A 552-amino-acid chain; its full sequence is uncharacterized protein (552 aa).

One can recognise a DhaL domain in the interval 8–200; sequence KLFADMIIQG…LLCVYEGFLK (193 aa).

This is an uncharacterized protein from Staphylococcus epidermidis (strain ATCC 12228 / FDA PCI 1200).